The sequence spans 230 residues: Intracellular hyphae protein 1 (230 aa).

The N-terminal stretch at Met1–Ala18 is a signal peptide. The interval Pro20–Cys102 is disordered. A run of 10 repeats spans residues Leu30–Pro33, Leu36–Pro39, Leu42–Pro45, Val46–Pro49, Tyr50–Lys53, Leu57–Pro60, Tyr65–Lys68, Val76–Pro79, Tyr80–Lys83, and Leu84–Pro87. Residues Leu30–Pro87 are 5 X 4 AA repeats of L-P-E-P. The interval Val46 to Pro87 is 2 X 4 AA repeats of V-E-G-P. The 3 X 4 AA repeats of Y-K-P-K stretch occupies residues Tyr50 to Lys83. The segment covering Glu74 to Leu84 has biased composition (basic and acidic residues). Residue Asn94 is glycosylated (N-linked (GlcNAc...) asparagine). Residues Lys108–Ile152 enclose the LysM 1 domain. Residue Asn161 is glycosylated (N-linked (GlcNAc...) asparagine). Residues Asp183–Val227 enclose the LysM 2 domain.

Forms a multimeric structure. N-glycosylated and may be O-glycosylated. As to expression, expressed in penetration hyphae, infection vesicles and primary hyphae (intracellular hyphae).

The protein resides in the secreted. It is found in the cell wall. May have roles in host-pathogen interaction, including establishment and maintenance of biotrophy, prevention of host recognition of the fungus and a barrier to host defense molecules. In Colletotrichum lindemuthianum (Bean anthracnose fungus), this protein is Intracellular hyphae protein 1 (CIH1).